A 223-amino-acid chain; its full sequence is UPF0441 protein YgiB (223 aa).

Positions 201–223 (ESVAKQSTMQRSAAGTSTRSMGG) are disordered. The segment covering 204 to 223 (AKQSTMQRSAAGTSTRSMGG) has biased composition (polar residues).

This sequence belongs to the UPF0441 family.

The polypeptide is UPF0441 protein YgiB (Salmonella gallinarum (strain 287/91 / NCTC 13346)).